The chain runs to 595 residues: Protein UL31 (595 aa).

Positions 1-40 (MGDKPTLVTLLTVAVSSPPPSSPLPLVSFTELLLPPPSVA) are cleaved as a signal peptide. The segment at 47–94 (TATSEVGEKTAEQEVAAAGPETRNERRENREDEGGETRTTGTTAVKRS) is disordered. Residues 68 to 82 (TRNERRENREDEGGE) are compositionally biased toward basic and acidic residues.

This sequence belongs to the herpesviridae U10 family. In terms of assembly, interacts with host CGAS.

It is found in the host cytoplasm. Its subcellular location is the host nucleus. Its function is as follows. Plays a role in the inhibition of host innate immune system by targeting host CGAS and promoting dissociation of DNA from CGAS, thereby inhibiting the enzymatic activity of CGAS. This chain is Protein UL31 (UL31), found in Human cytomegalovirus (strain Merlin) (HHV-5).